Consider the following 371-residue polypeptide: Cytochrome b (371 aa).

4 consecutive transmembrane segments (helical) span residues 25-45 (FGSM…FLAV), 69-90 (WMVQ…YIHI), 105-125 (WLSG…GYVL), and 170-190 (FFAL…LHVL). The heme b site is built by His-75 and His-89. 2 residues coordinate heme b: His-174 and His-188. An a ubiquinone-binding site is contributed by His-193. Transmembrane regions (helical) follow at residues 218–238 (MKDL…ISFF), 280–300 (LGGA…PFIH), 312–332 (LMQL…WAAT), and 339–358 (FISI…ISNP).

This sequence belongs to the cytochrome b family. In terms of assembly, the cytochrome bc1 complex contains 3 respiratory subunits (MT-CYB, CYC1 and UQCRFS1), 2 core proteins (UQCRC1 and UQCRC2) and probably 6 low-molecular weight proteins. Requires heme b as cofactor.

Its subcellular location is the mitochondrion inner membrane. Functionally, component of the ubiquinol-cytochrome c reductase complex (complex III or cytochrome b-c1 complex) that is part of the mitochondrial respiratory chain. The b-c1 complex mediates electron transfer from ubiquinol to cytochrome c. Contributes to the generation of a proton gradient across the mitochondrial membrane that is then used for ATP synthesis. This chain is Cytochrome b (MT-CYB), found in Boa constrictor (Boa).